Reading from the N-terminus, the 261-residue chain is Global transcriptional regulator CodY (261 aa).

The interval 1-159 (MANLLSKTRR…SSTVVGIQLL (159 aa)) is GAF domain. Positions 207-226 (ASVIADRIGITRSVIVNALR) form a DNA-binding region, H-T-H motif.

The protein belongs to the CodY family.

It is found in the cytoplasm. Functionally, DNA-binding global transcriptional regulator which is involved in the adaptive response to starvation and acts by directly or indirectly controlling the expression of numerous genes in response to nutrient availability. During rapid exponential growth, CodY is highly active and represses genes whose products allow adaptation to nutrient depletion. This is Global transcriptional regulator CodY from Streptococcus mutans serotype c (strain ATCC 700610 / UA159).